A 227-amino-acid chain; its full sequence is UPF0441 protein YPO0661/y3517/YP_2976 (227 aa).

The segment at 198–227 (GGFGESVAKQSSMQRSAATSSKTTTRSMGG) is disordered. Low complexity predominate over residues 212-227 (RSAATSSKTTTRSMGG).

The protein belongs to the UPF0441 family.

This chain is UPF0441 protein YPO0661/y3517/YP_2976, found in Yersinia pestis.